The chain runs to 456 residues: Asparagine--tRNA ligase (456 aa).

It belongs to the class-II aminoacyl-tRNA synthetase family. As to quaternary structure, homodimer.

The protein localises to the cytoplasm. The catalysed reaction is tRNA(Asn) + L-asparagine + ATP = L-asparaginyl-tRNA(Asn) + AMP + diphosphate + H(+). The sequence is that of Asparagine--tRNA ligase from Mycoplasmoides gallisepticum (strain R(low / passage 15 / clone 2)) (Mycoplasma gallisepticum).